A 1502-amino-acid polypeptide reads, in one-letter code: tRNA (32-2'-O)-methyltransferase regulator trm732 (1502 aa).

This sequence belongs to the THADA family.

The protein resides in the cytoplasm. It is found in the nucleus. Together with methyltransferase trm7, methylates the 2'-O-ribose of nucleotides at position 32 of the anticodon loop of substrate tRNAs. In Schizosaccharomyces pombe (strain 972 / ATCC 24843) (Fission yeast), this protein is tRNA (32-2'-O)-methyltransferase regulator trm732.